Consider the following 468-residue polypeptide: 3-isopropylmalate dehydratase large subunit (468 aa).

[4Fe-4S] cluster-binding residues include Cys-347, Cys-407, and Cys-410.

It belongs to the aconitase/IPM isomerase family. LeuC type 1 subfamily. Heterodimer of LeuC and LeuD. [4Fe-4S] cluster is required as a cofactor.

The catalysed reaction is (2R,3S)-3-isopropylmalate = (2S)-2-isopropylmalate. The protein operates within amino-acid biosynthesis; L-leucine biosynthesis; L-leucine from 3-methyl-2-oxobutanoate: step 2/4. In terms of biological role, catalyzes the isomerization between 2-isopropylmalate and 3-isopropylmalate, via the formation of 2-isopropylmaleate. This is 3-isopropylmalate dehydratase large subunit from Prochlorococcus marinus (strain AS9601).